The primary structure comprises 352 residues: Chorismate synthase (352 aa).

NADP(+) contacts are provided by Arg48 and Arg54. Residues 125 to 127 (RAS), 238 to 239 (NA), Ala278, 293 to 297 (KPASS), and Arg319 each bind FMN.

Belongs to the chorismate synthase family. Homotetramer. It depends on FMNH2 as a cofactor.

The catalysed reaction is 5-O-(1-carboxyvinyl)-3-phosphoshikimate = chorismate + phosphate. Its pathway is metabolic intermediate biosynthesis; chorismate biosynthesis; chorismate from D-erythrose 4-phosphate and phosphoenolpyruvate: step 7/7. Functionally, catalyzes the anti-1,4-elimination of the C-3 phosphate and the C-6 proR hydrogen from 5-enolpyruvylshikimate-3-phosphate (EPSP) to yield chorismate, which is the branch point compound that serves as the starting substrate for the three terminal pathways of aromatic amino acid biosynthesis. This reaction introduces a second double bond into the aromatic ring system. The polypeptide is Chorismate synthase (Coxiella burnetii (strain RSA 493 / Nine Mile phase I)).